Consider the following 287-residue polypeptide: Uroplakin-3a (287 aa).

The N-terminal stretch at 1 to 18 is a signal peptide; it reads MPPLWVVLALGCLRLGSG. Residues 19-207 are Lumenal-facing; sequence VNLQPQLASV…DTWPGRRSGG (189 aa). 3 N-linked (GlcNAc...) asparagine glycosylation sites follow: N74, N139, and N170. The chain crosses the membrane as a helical span at residues 208–235; it reads MIVITSILGSLPFFLLIGFAGAIVLSLV. Residues 236-287 are Cytoplasmic-facing; the sequence is DRGDADGATSHDSQITQEAVPKSLGTSEPSYTSVNRGPSLDRAEVYASKLQD. Residues 243-274 are disordered; it reads ATSHDSQITQEAVPKSLGTSEPSYTSVNRGPS. Residues 259-271 are compositionally biased toward polar residues; that stretch reads LGTSEPSYTSVNR.

This sequence belongs to the uroplakin-3 family. Heterodimer with uroplakin-1B (UPK1B). Bladder epithelium.

The protein resides in the endoplasmic reticulum membrane. Its function is as follows. Component of the asymmetric unit membrane (AUM); a highly specialized biomembrane elaborated by terminally differentiated urothelial cells. May play an important role in AUM-cytoskeleton interaction in terminally differentiated urothelial cells. It also contributes to the formation of urothelial glycocalyx which may play an important role in preventing bacterial adherence. The polypeptide is Uroplakin-3a (UPK3A) (Bos taurus (Bovine)).